We begin with the raw amino-acid sequence, 354 residues long: S-adenosylmethionine:tRNA ribosyltransferase-isomerase (354 aa).

The protein belongs to the QueA family. Monomer.

It localises to the cytoplasm. It catalyses the reaction 7-aminomethyl-7-carbaguanosine(34) in tRNA + S-adenosyl-L-methionine = epoxyqueuosine(34) in tRNA + adenine + L-methionine + 2 H(+). The protein operates within tRNA modification; tRNA-queuosine biosynthesis. In terms of biological role, transfers and isomerizes the ribose moiety from AdoMet to the 7-aminomethyl group of 7-deazaguanine (preQ1-tRNA) to give epoxyqueuosine (oQ-tRNA). The polypeptide is S-adenosylmethionine:tRNA ribosyltransferase-isomerase (Pseudomonas syringae pv. tomato (strain ATCC BAA-871 / DC3000)).